A 1136-amino-acid chain; its full sequence is Nitric oxide synthase, inducible (1136 aa).

Residues C107 and C112 each contribute to the Zn(2+) site. C197 lines the heme b pocket. Positions 260, 369, 370, and 374 each coordinate L-arginine. (6R)-L-erythro-5,6,7,8-tetrahydrobiopterin contacts are provided by R378, V459, W460, and F473. Y488 contributes to the heme b binding site. Positions 512–532 are calmodulin-binding; it reads LSILAKAVLLASLLLQKTMAA. The Flavodoxin-like domain maps to 536–674; it reads VTVIYATETG…AFRTWAVTAF (139 aa). The FMN site is built by T542, E543, T544, K546, S547, S588, T589, S625, C632, E658, and Q662. The region spanning 727 to 967 is the FAD-binding FR-type domain; the sequence is KNVIPMKLKF…VRSADGFRLP (241 aa). R747 contributes to the NADP(+) binding site. 10 residues coordinate FAD: H769, R903, Y905, S906, T921, A923, Y927, V940, C941, and S942. Positions 981, 1014, 1043, 1044, 1050, 1052, 1054, and 1087 each coordinate NADP(+).

This sequence belongs to the NOS family. Homodimer. Requires heme b as cofactor. It depends on FAD as a cofactor. FMN serves as cofactor. The cofactor is (6R)-L-erythro-5,6,7,8-tetrahydrobiopterin.

It is found in the cytoplasm. Its subcellular location is the cytosol. It carries out the reaction 2 L-arginine + 3 NADPH + 4 O2 + H(+) = 2 L-citrulline + 2 nitric oxide + 3 NADP(+) + 4 H2O. Its activity is regulated as follows. Not stimulated by calcium/calmodulin. In terms of biological role, produces nitric oxide (NO) which is a messenger molecule with diverse functions throughout the body. NO may serve as both a paracrine and autocrine signal for modulating osteoclast bone resorption. Also has nitrosylase activity and mediates cysteine S-nitrosylation of cytoplasmic target proteins such COX2. This chain is Nitric oxide synthase, inducible (NOS2), found in Gallus gallus (Chicken).